The following is a 100-amino-acid chain: Urease subunit gamma (100 aa).

Belongs to the urease gamma subunit family. As to quaternary structure, heterotrimer of UreA (gamma), UreB (beta) and UreC (alpha) subunits. Three heterotrimers associate to form the active enzyme.

The protein resides in the cytoplasm. The catalysed reaction is urea + 2 H2O + H(+) = hydrogencarbonate + 2 NH4(+). The protein operates within nitrogen metabolism; urea degradation; CO(2) and NH(3) from urea (urease route): step 1/1. This chain is Urease subunit gamma, found in Prochlorococcus marinus (strain MIT 9312).